Here is a 216-residue protein sequence, read N- to C-terminus: UPF0323 lipoprotein HPAG1_0235 (216 aa).

An N-terminal signal peptide occupies residues 1–27 (MKKPYRKISDYAIVGGLSALVMVSIVG). A lipid anchor (N-palmitoyl cysteine) is attached at Cys-28. Cys-28 carries S-diacylglycerol cysteine lipidation. Positions 159–196 (QRTYKSPQAYQRSQNSFSKSAPSASGMGTASKGQSGFF) are enriched in polar residues. Residues 159 to 216 (QRTYKSPQAYQRSQNSFSKSAPSASGMGTASKGQSGFFGSSRPTSSPAVSSGTRGFNA) are disordered. The segment covering 198–209 (SSRPTSSPAVSS) has biased composition (low complexity).

This sequence belongs to the UPF0323 family.

Its subcellular location is the cell membrane. This chain is UPF0323 lipoprotein HPAG1_0235, found in Helicobacter pylori (strain HPAG1).